A 78-amino-acid polypeptide reads, in one-letter code: MSDIAERVKKIVAEHLGVEPEKVTESASFIDDLGADSLDTVELVMAFEEAFNCEIPDDAAETILTVGDAIKFLEKNAA.

The 76-residue stretch at 2 to 77 (SDIAERVKKI…DAIKFLEKNA (76 aa)) folds into the Carrier domain. At Ser-37 the chain carries O-(pantetheine 4'-phosphoryl)serine.

It belongs to the acyl carrier protein (ACP) family. 4'-phosphopantetheine is transferred from CoA to a specific serine of apo-ACP by AcpS. This modification is essential for activity because fatty acids are bound in thioester linkage to the sulfhydryl of the prosthetic group.

It localises to the cytoplasm. It participates in lipid metabolism; fatty acid biosynthesis. Carrier of the growing fatty acid chain in fatty acid biosynthesis. The chain is Acyl carrier protein from Xanthobacter autotrophicus (strain ATCC BAA-1158 / Py2).